Reading from the N-terminus, the 1111-residue chain is Lysylphosphatidylglycerol biosynthesis bifunctional protein LysX (1111 aa).

The segment at Met-1–Asp-612 is phosphatidylglycerol lysyltransferase. The next 7 membrane-spanning stretches (helical) occupy residues Val-18–Val-38, Phe-60–Ala-80, Ile-84–Leu-104, Val-118–Phe-138, Gly-152–Phe-172, Val-209–Phe-229, and Ala-308–Gly-328. The tract at residues Met-613–Arg-1111 is lysine--tRNA ligase. A DNA-binding region (OB) is located at residues Val-674–Trp-747. 2 residues coordinate Mg(2+): Asp-1023 and Glu-1030.

In the N-terminal section; belongs to the LPG synthetase family. It in the C-terminal section; belongs to the class-II aminoacyl-tRNA synthetase family. It depends on Mg(2+) as a cofactor.

Its subcellular location is the cell membrane. The enzyme catalyses tRNA(Lys) + L-lysine + ATP = L-lysyl-tRNA(Lys) + AMP + diphosphate. The catalysed reaction is L-lysyl-tRNA(Lys) + a 1,2-diacyl-sn-glycero-3-phospho-(1'-sn-glycerol) = a 1,2-diacyl-sn-glycero-3-phospho-1'-(3'-O-L-lysyl)-sn-glycerol + tRNA(Lys). Catalyzes the production of L-lysyl-tRNA(Lys)transfer and the transfer of a lysyl group from L-lysyl-tRNA(Lys) to membrane-bound phosphatidylglycerol (PG), which produces lysylphosphatidylglycerol (LPG), one of the components of the bacterial membrane with a positive net charge. LPG synthesis contributes to the resistance to cationic antimicrobial peptides (CAMPs) and likely protects M.tuberculosis against the CAMPs produced by competiting microorganisms (bacteriocins). In fact, the modification of anionic phosphatidylglycerol with positively charged L-lysine results in repulsion of the peptides. In Mycobacterium sp. (strain JLS), this protein is Lysylphosphatidylglycerol biosynthesis bifunctional protein LysX (lysX).